We begin with the raw amino-acid sequence, 745 residues long: DNA ligase (745 aa).

The interval 1-27 (MRNHGPGSERKDACVSAPDPTFSDDVP) is disordered. Residues 57 to 61 (DAEYD), 106 to 107 (SL), and Glu135 contribute to the NAD(+) site. Lys137 serves as the catalytic N6-AMP-lysine intermediate. Positions 158 and 197 each coordinate NAD(+). The disordered stretch occupies residues 216 to 235 (GKPPFANPRNAAAGSLRQKD). The NAD(+) site is built by Lys313 and Lys337. The Zn(2+) site is built by Cys431, Cys434, Cys450, and Cys456. Positions 649 to 738 (DGPRLLDGIT…PEAARAARLS (90 aa)) constitute a BRCT domain.

Belongs to the NAD-dependent DNA ligase family. LigA subfamily. Requires Mg(2+) as cofactor. The cofactor is Mn(2+).

It carries out the reaction NAD(+) + (deoxyribonucleotide)n-3'-hydroxyl + 5'-phospho-(deoxyribonucleotide)m = (deoxyribonucleotide)n+m + AMP + beta-nicotinamide D-nucleotide.. Its function is as follows. DNA ligase that catalyzes the formation of phosphodiester linkages between 5'-phosphoryl and 3'-hydroxyl groups in double-stranded DNA using NAD as a coenzyme and as the energy source for the reaction. It is essential for DNA replication and repair of damaged DNA. The chain is DNA ligase from Thermobifida fusca (strain YX).